The chain runs to 146 residues: Large ribosomal subunit protein bL19 (146 aa).

The segment at 119 to 146 (DYRKKGEKGVEKVETTPVSADIETQVAE) is disordered.

This sequence belongs to the bacterial ribosomal protein bL19 family.

Functionally, this protein is located at the 30S-50S ribosomal subunit interface and may play a role in the structure and function of the aminoacyl-tRNA binding site. This Bartonella tribocorum (strain CIP 105476 / IBS 506) protein is Large ribosomal subunit protein bL19.